The chain runs to 140 residues: Nucleoside diphosphate kinase (140 aa).

6 residues coordinate ATP: K11, F59, R87, T93, R104, and N114. The active-site Pros-phosphohistidine intermediate is the H117.

The protein belongs to the NDK family. In terms of assembly, homotetramer. The cofactor is Mg(2+).

The protein resides in the cytoplasm. It catalyses the reaction a 2'-deoxyribonucleoside 5'-diphosphate + ATP = a 2'-deoxyribonucleoside 5'-triphosphate + ADP. It carries out the reaction a ribonucleoside 5'-diphosphate + ATP = a ribonucleoside 5'-triphosphate + ADP. In terms of biological role, major role in the synthesis of nucleoside triphosphates other than ATP. The ATP gamma phosphate is transferred to the NDP beta phosphate via a ping-pong mechanism, using a phosphorylated active-site intermediate. This is Nucleoside diphosphate kinase from Rhizorhabdus wittichii (strain DSM 6014 / CCUG 31198 / JCM 15750 / NBRC 105917 / EY 4224 / RW1) (Sphingomonas wittichii).